The sequence spans 98 residues: Integration host factor subunit alpha (98 aa).

Belongs to the bacterial histone-like protein family. Heterodimer of an alpha and a beta chain.

This protein is one of the two subunits of integration host factor, a specific DNA-binding protein that functions in genetic recombination as well as in transcriptional and translational control. The sequence is that of Integration host factor subunit alpha from Actinobacillus pleuropneumoniae serotype 5b (strain L20).